A 33-amino-acid chain; its full sequence is Alpha-amanitin proprotein (33 aa).

Residues 1–10 (MSDINATRLP) constitute a propeptide that is removed on maturation. I11 carries the post-translational modification (3R,4R)-4,5-dihydroxyisoleucine; in form alpha-amanitin. (3R,4S)-4-hydroxyisoleucine; in form gamma-amanitin is present on I11. Residues 11 to 18 (IWGIGCNP) constitute a cross-link (cyclopeptide (Ile-Pro)). The segment at residues 12–16 (WGIGC) is a cross-link (2'-cysteinyl-6'-hydroxytryptophan sulfoxide (Trp-Cys)). A 4-hydroxyproline modification is found at P18. Positions 19-33 (SVGDEVTALLTSGEA) are excised as a propeptide.

The protein belongs to the MSDIN fungal toxin family. Processed by the macrocyclase-peptidase enzyme POPB to yield a toxic cyclic decapeptide. POPB first removes 10 residues from the N-terminus. Conformational trapping of the remaining peptide forces the enzyme to release this intermediate rather than proceed to macrocyclization. The enzyme rebinds the remaining peptide in a different conformation and catalyzes macrocyclization of the N-terminal 8 residues.

In terms of biological role, major toxin belonging to the bicyclic octapeptides amatoxins that acts by binding non-competitively to RNA polymerase II and greatly slowing the elongation of transcripts from target promoters. The sequence is that of Alpha-amanitin proprotein from Amanita fuliginea (East Asian brown death cap).